The following is a 646-amino-acid chain: Centrosomal protein of 72 kDa (646 aa).

LRR repeat units lie at residues 28 to 49 (ELRS…GNSL), 54 to 75 (ALKS…QYLV), and 76 to 97 (SLES…FRLH). The region spanning 110 to 149 (NPVVKNESDYRLFVVHMLPKLRQLDDRPVRESERKASQLH) is the LRRCT domain. Phosphoserine occurs at positions 117 and 236. 2 disordered regions span residues 300–342 (SVDV…RFQV) and 357–399 (GPSS…SDPR). Over residues 307–319 (ASSAQKSSLSSQK) the composition is skewed to low complexity. Residue Ser380 is modified to Phosphoserine. The segment covering 383 to 392 (EALEAEERTS) has biased composition (basic and acidic residues). A Phosphoserine modification is found at Ser402. Residues 476–622 (LSLENKTLQS…RAEVEQMRWS (147 aa)) are a coiled coil.

It belongs to the CEP72 family. In terms of assembly, interacts with KIZ, PCM1 and CDK5RAP2.

The protein resides in the cytoplasm. The protein localises to the cytoskeleton. It localises to the microtubule organizing center. It is found in the centrosome. Its subcellular location is the centriolar satellite. Involved in the recruitment of key centrosomal proteins to the centrosome. Provides centrosomal microtubule-nucleation activity on the gamma-tubulin ring complexes (gamma-TuRCs) and has critical roles in forming a focused bipolar spindle, which is needed for proper tension generation between sister chromatids. Required for localization of KIZ, AKAP9 and gamma-tubulin ring complexes (gamma-TuRCs). Involved in centriole duplication. Required for CDK5RAP22, CEP152, WDR62 and CEP63 centrosomal localization and promotes the centrosomal localization of CDK2. This Mus musculus (Mouse) protein is Centrosomal protein of 72 kDa (Cep72).